Reading from the N-terminus, the 190-residue chain is dCTP deaminase (190 aa).

DCTP contacts are provided by residues 111–116, 135–137, Q156, Y172, and Q182; these read KSTYAR and TLE. E137 functions as the Proton donor/acceptor in the catalytic mechanism.

Belongs to the dCTP deaminase family. In terms of assembly, homotrimer.

The enzyme catalyses dCTP + H2O + H(+) = dUTP + NH4(+). It functions in the pathway pyrimidine metabolism; dUMP biosynthesis; dUMP from dCTP (dUTP route): step 1/2. In terms of biological role, catalyzes the deamination of dCTP to dUTP. The sequence is that of dCTP deaminase from Stenotrophomonas maltophilia (strain K279a).